The following is a 65-amino-acid chain: Large ribosomal subunit protein bL35 (65 aa).

Belongs to the bacterial ribosomal protein bL35 family.

This chain is Large ribosomal subunit protein bL35, found in Borrelia duttonii (strain Ly).